The sequence spans 1300 residues: Nephrocystin-3 (1300 aa).

Positions 82–183 (KNNEVASMQK…LQRLQAQGIQ (102 aa)) form a coiled coil. TPR repeat units follow at residues 443 to 476 (TMED…ICEL), 916 to 949 (ADLY…RETA), 958 to 991 (AQSL…SENA), 1000 to 1033 (AREL…RQKS), 1066 to 1099 (ARTL…RERV), 1108 to 1141 (AQSI…RRRA), 1150 to 1183 (AYTV…RQKS), 1192 to 1225 (ATAL…YEDS), and 1234 to 1267 (GETL…KETE). A disordered region spans residues 1268–1288 (TSVLGAKAPSGHSSSGGDTYS). The span at 1278–1288 (GHSSSGGDTYS) shows a compositional bias: polar residues.

The protein localises to the cell projection. Its subcellular location is the cilium. In terms of biological role, required for normal ciliary development and function. Inhibits disheveled-1-induced canonical Wnt-signaling activity and may also play a role in the control of non-canonical Wnt signaling that regulates planar cell polarity. Probably acts as a molecular switch between different Wnt signaling pathways. Required for proper convergent extension cell movements. This is Nephrocystin-3 (nphp3) from Xenopus laevis (African clawed frog).